A 66-amino-acid polypeptide reads, in one-letter code: Large ribosomal subunit protein bL33c (66 aa).

Belongs to the bacterial ribosomal protein bL33 family.

It is found in the plastid. The protein resides in the chloroplast. In Morus indica (Mulberry), this protein is Large ribosomal subunit protein bL33c.